The chain runs to 310 residues: MDVIKTQQISARTIEKVIVHPLVLLSIVDHYNRVAKDTSKRVVGVLLGSSSRGTVDVTNSYAVPFEEDDKDTSIWFLDHNYHESMFHMFKRINAKEHIVGWYSTGPKLRENDLDVHALFNGYVPNPVLVIIDVQPKELGIPTKAYYAVEEVKENATQKSQQVFVHVPTEIAAHEVEEIGVEHLLRDVKDTTISTLATEVTAKLTALKGLDARLREIRTYLDLVIEGKLPLNHEILYHLQDVFNLLPNLNVNELVKAFAVKTNDMMLVIYLSSLIRSVIALHSLINNKLLNKEHEKAEDSKPVDIPLITES.

Position 1 is an N-acetylmethionine (M1). Positions 17-154 (VIVHPLVLLS…YYAVEEVKEN (138 aa)) constitute an MPN domain.

The protein belongs to the peptidase M67A family. In terms of assembly, component of the 19S regulatory particle (RP/PA700) lid subcomplex of the 26S proteasome. The 26S proteasome is composed of a core protease (CP), known as the 20S proteasome, capped at one or both ends by the 19S regulatory particle (RP/PA700). The RP/PA700 complex is composed of at least 17 different subunits in two subcomplexes, the base and the lid, which form the portions proximal and distal to the 20S proteolytic core, respectively.

Its function is as follows. Acts as a regulatory subunit of the 26S proteasome which is involved in the ATP-dependent degradation of ubiquitinated proteins. The protein is 26S proteasome non-ATPase regulatory subunit 7 homolog B (RPN8B) of Arabidopsis thaliana (Mouse-ear cress).